Consider the following 293-residue polypeptide: Capsid protein (293 aa).

The span at 1 to 14 (MSESKAETPSKSAE) shows a compositional bias: basic and acidic residues. Residues 1–49 (MSESKAETPSKSAEKGVASLSTSAPPSSTTPTAQAKQTPPPVATTARPM) are disordered. Over residues 18 to 37 (ASLSTSAPPSSTTPTAQAKQ) the composition is skewed to low complexity.

The protein belongs to the potexvirus capsid protein family. As to quaternary structure, interacts with host NbANKr; this interaction targets the capsid protein to the host chloroplast.

The protein resides in the virion. Its subcellular location is the host chloroplast envelope. Required for genome encapsidation. Forms ribonucleoprotein complexes along with TGB1 helicase and viral RNA. This is Capsid protein (ORF5) from Lolium latent virus (isolate Lolium/USA/US1/-) (LoLV).